The primary structure comprises 142 residues: ATP synthase epsilon chain (142 aa).

It belongs to the ATPase epsilon chain family. As to quaternary structure, F-type ATPases have 2 components, CF(1) - the catalytic core - and CF(0) - the membrane proton channel. CF(1) has five subunits: alpha(3), beta(3), gamma(1), delta(1), epsilon(1). CF(0) has three main subunits: a, b and c.

The protein resides in the cell inner membrane. Produces ATP from ADP in the presence of a proton gradient across the membrane. The polypeptide is ATP synthase epsilon chain (Pasteurella multocida (strain Pm70)).